A 390-amino-acid chain; its full sequence is F-box/kelch-repeat protein At3g06570 (390 aa).

The F-box domain occupies Ser23–Arg69. 3 Kelch repeats span residues Asp140–Arg183, Ile185–Ala234, and Ile236–Asn281.

The sequence is that of F-box/kelch-repeat protein At3g06570 from Arabidopsis thaliana (Mouse-ear cress).